The chain runs to 90 residues: Small ribosomal subunit protein bS20 (90 aa).

Belongs to the bacterial ribosomal protein bS20 family.

Its function is as follows. Binds directly to 16S ribosomal RNA. This is Small ribosomal subunit protein bS20 from Fusobacterium nucleatum subsp. nucleatum (strain ATCC 25586 / DSM 15643 / BCRC 10681 / CIP 101130 / JCM 8532 / KCTC 2640 / LMG 13131 / VPI 4355).